The following is a 242-amino-acid chain: Biosynthetic peptidoglycan transglycosylase (242 aa).

A helical transmembrane segment spans residues 12–32; the sequence is LLLWLIALSVLLVLLLRWVPP.

This sequence belongs to the glycosyltransferase 51 family.

The protein localises to the cell inner membrane. The enzyme catalyses [GlcNAc-(1-&gt;4)-Mur2Ac(oyl-L-Ala-gamma-D-Glu-L-Lys-D-Ala-D-Ala)](n)-di-trans,octa-cis-undecaprenyl diphosphate + beta-D-GlcNAc-(1-&gt;4)-Mur2Ac(oyl-L-Ala-gamma-D-Glu-L-Lys-D-Ala-D-Ala)-di-trans,octa-cis-undecaprenyl diphosphate = [GlcNAc-(1-&gt;4)-Mur2Ac(oyl-L-Ala-gamma-D-Glu-L-Lys-D-Ala-D-Ala)](n+1)-di-trans,octa-cis-undecaprenyl diphosphate + di-trans,octa-cis-undecaprenyl diphosphate + H(+). It functions in the pathway cell wall biogenesis; peptidoglycan biosynthesis. Functionally, peptidoglycan polymerase that catalyzes glycan chain elongation from lipid-linked precursors. The chain is Biosynthetic peptidoglycan transglycosylase from Stutzerimonas stutzeri (strain A1501) (Pseudomonas stutzeri).